Consider the following 644-residue polypeptide: uncharacterized protein (644 aa).

The segment at 65–117 (DSDVETTGGGGRGSTTSTEDRIDEHDDAIEDDGVSNEEDENQDAEQEQEVDLN) is disordered. A compositionally biased stretch (acidic residues) spans 89-114 (HDDAIEDDGVSNEEDENQDAEQEQEV).

This is an uncharacterized protein from Arabidopsis thaliana (Mouse-ear cress).